A 117-amino-acid polypeptide reads, in one-letter code: Phosphoribosyl-ATP pyrophosphatase (117 aa).

Over residues 96 to 105 (GVSGIEEKLS) the composition is skewed to basic and acidic residues. Positions 96–117 (GVSGIEEKLSRSQNQPEPTKAE) are disordered. Residues 106-117 (RSQNQPEPTKAE) show a composition bias toward polar residues.

It belongs to the PRA-PH family.

The protein localises to the cytoplasm. It catalyses the reaction 1-(5-phospho-beta-D-ribosyl)-ATP + H2O = 1-(5-phospho-beta-D-ribosyl)-5'-AMP + diphosphate + H(+). Its pathway is amino-acid biosynthesis; L-histidine biosynthesis; L-histidine from 5-phospho-alpha-D-ribose 1-diphosphate: step 2/9. This chain is Phosphoribosyl-ATP pyrophosphatase, found in Nitrosomonas eutropha (strain DSM 101675 / C91 / Nm57).